The chain runs to 178 residues: N-alpha-acetyltransferase 20 (178 aa).

The 156-residue stretch at 2-157 folds into the N-acetyltransferase domain; it reads TTLRAFTCDD…DAYDMRKALS (156 aa).

This sequence belongs to the acetyltransferase family. ARD1 subfamily. As to quaternary structure, component of the N-terminal acetyltransferase B (NatB) complex which is composed of naa20 and naa25.

It localises to the cytoplasm. The protein localises to the nucleus. It carries out the reaction N-terminal L-methionyl-L-asparaginyl-[protein] + acetyl-CoA = N-terminal N(alpha)-acetyl-L-methionyl-L-asparaginyl-[protein] + CoA + H(+). The catalysed reaction is N-terminal L-methionyl-L-glutaminyl-[protein] + acetyl-CoA = N-terminal N(alpha)-acetyl-L-methionyl-L-glutaminyl-[protein] + CoA + H(+). It catalyses the reaction N-terminal L-methionyl-L-aspartyl-[protein] + acetyl-CoA = N-terminal N(alpha)-acetyl-L-methionyl-L-aspartyl-[protein] + CoA + H(+). The enzyme catalyses N-terminal L-methionyl-L-glutamyl-[protein] + acetyl-CoA = N-terminal N(alpha)-acetyl-L-methionyl-L-glutamyl-[protein] + CoA + H(+). Its function is as follows. Catalytic subunit of the NatB complex which catalyzes acetylation of the N-terminal methionine residues of peptides beginning with Met-Asp, Met-Glu, Met-Asn and Met-Gln. Proteins with cell cycle functions are overrepresented in the pool of NatB substrates. Required for maintaining the structure and function of actomyosin fibers and for proper cellular migration. The polypeptide is N-alpha-acetyltransferase 20 (naa20) (Danio rerio (Zebrafish)).